Consider the following 425-residue polypeptide: Phosphoribosylamine--glycine ligase (425 aa).

The ATP-grasp domain occupies 110-317 (KEFMKRHGIP…LFDALLASVE (208 aa)). 137 to 198 (ETCPTFPQVI…EAFLSGQEAS (62 aa)) serves as a coordination point for ATP. Mg(2+) is bound by residues Glu-287 and Asn-289.

This sequence belongs to the GARS family. The cofactor is Mg(2+). Mn(2+) serves as cofactor.

The enzyme catalyses 5-phospho-beta-D-ribosylamine + glycine + ATP = N(1)-(5-phospho-beta-D-ribosyl)glycinamide + ADP + phosphate + H(+). The protein operates within purine metabolism; IMP biosynthesis via de novo pathway; N(1)-(5-phospho-D-ribosyl)glycinamide from 5-phospho-alpha-D-ribose 1-diphosphate: step 2/2. The chain is Phosphoribosylamine--glycine ligase from Chlorobaculum tepidum (strain ATCC 49652 / DSM 12025 / NBRC 103806 / TLS) (Chlorobium tepidum).